The chain runs to 213 residues: Orotate phosphoribosyltransferase (213 aa).

K26 lines the 5-phospho-alpha-D-ribose 1-diphosphate pocket. Residue 34-35 (FF) coordinates orotate. Residues 72-73 (YK), R99, K100, K103, H105, and 124-132 (DDVITAGTA) each bind 5-phospho-alpha-D-ribose 1-diphosphate. Residues T128 and R156 each coordinate orotate.

It belongs to the purine/pyrimidine phosphoribosyltransferase family. PyrE subfamily. In terms of assembly, homodimer. Requires Mg(2+) as cofactor.

It carries out the reaction orotidine 5'-phosphate + diphosphate = orotate + 5-phospho-alpha-D-ribose 1-diphosphate. Its pathway is pyrimidine metabolism; UMP biosynthesis via de novo pathway; UMP from orotate: step 1/2. Catalyzes the transfer of a ribosyl phosphate group from 5-phosphoribose 1-diphosphate to orotate, leading to the formation of orotidine monophosphate (OMP). In Thioalkalivibrio sulfidiphilus (strain HL-EbGR7), this protein is Orotate phosphoribosyltransferase.